Here is a 179-residue protein sequence, read N- to C-terminus: MGQLIAKLMSIFGNQEHTVIIVGLDNEGKTTILYRFLTNEVVHMCPTIGSNVEEIILPKTHFFMWDIVRPEALSFIWNTYYSNTEFIILVIDSTDRDRLLTTREELYKMLAHEALQDASVLIFANKQDVKDSMRMVEISHFLTLSTIKDHSWHIQGCCALTREGLPARLQWMESQAAAN.

Gly2 carries N-myristoyl glycine lipidation. Residues 23 to 30 (GLDNEGKT), 66 to 70 (DIVRP), and 125 to 128 (NKQD) each bind GTP.

This sequence belongs to the small GTPase superfamily. Arf family.

Binds and exchanges GTP and GDP. This chain is Putative ADP-ribosylation factor-like protein 5C (ARL5C), found in Homo sapiens (Human).